A 427-amino-acid polypeptide reads, in one-letter code: Adenylosuccinate synthetase (427 aa).

GTP is bound by residues 12-18 (GDEGKGK) and 40-42 (GHT). The active-site Proton acceptor is the Asp-13. Positions 13 and 40 each coordinate Mg(2+). IMP-binding positions include 13–16 (DEGK), 38–41 (NAGH), Thr-128, Arg-142, Gln-223, Thr-238, and Arg-302. Residue His-41 is the Proton donor of the active site. 298-304 (TTTGRAR) provides a ligand contact to substrate. Residues Arg-304, 330-332 (KLD), and 412-414 (AVG) contribute to the GTP site.

Belongs to the adenylosuccinate synthetase family. Homodimer. Mg(2+) is required as a cofactor.

It localises to the cytoplasm. The enzyme catalyses IMP + L-aspartate + GTP = N(6)-(1,2-dicarboxyethyl)-AMP + GDP + phosphate + 2 H(+). Its pathway is purine metabolism; AMP biosynthesis via de novo pathway; AMP from IMP: step 1/2. Plays an important role in the de novo pathway of purine nucleotide biosynthesis. Catalyzes the first committed step in the biosynthesis of AMP from IMP. The sequence is that of Adenylosuccinate synthetase from Desulfitobacterium hafniense (strain DSM 10664 / DCB-2).